Reading from the N-terminus, the 446-residue chain is Tol-Pal system protein TolB (446 aa).

A signal peptide spans 1–36; the sequence is MMDVQTVRRGNAVQSLMSKLILPLVMAVAFALPARA. The tract at residues 424-446 is disordered; sequence GYNERPSPTPTFASDPAWSPRIQ.

Belongs to the TolB family. In terms of assembly, the Tol-Pal system is composed of five core proteins: the inner membrane proteins TolA, TolQ and TolR, the periplasmic protein TolB and the outer membrane protein Pal. They form a network linking the inner and outer membranes and the peptidoglycan layer.

Its subcellular location is the periplasm. Its function is as follows. Part of the Tol-Pal system, which plays a role in outer membrane invagination during cell division and is important for maintaining outer membrane integrity. The sequence is that of Tol-Pal system protein TolB from Parvibaculum lavamentivorans (strain DS-1 / DSM 13023 / NCIMB 13966).